The following is a 416-amino-acid chain: Lipoyl synthase, mitochondrial (416 aa).

A mitochondrion-targeting transit peptide spans Met-1 to Tyr-33. The segment at Leu-20–Thr-52 is disordered. Residues Thr-29–Pro-46 show a composition bias toward low complexity. Positions 133, 138, 144, 164, 168, 171, and 379 each coordinate [4Fe-4S] cluster. Residues Gly-147–Leu-368 enclose the Radical SAM core domain.

The protein belongs to the radical SAM superfamily. Lipoyl synthase family. [4Fe-4S] cluster is required as a cofactor.

Its subcellular location is the mitochondrion. It catalyses the reaction [[Fe-S] cluster scaffold protein carrying a second [4Fe-4S](2+) cluster] + N(6)-octanoyl-L-lysyl-[protein] + 2 oxidized [2Fe-2S]-[ferredoxin] + 2 S-adenosyl-L-methionine + 4 H(+) = [[Fe-S] cluster scaffold protein] + N(6)-[(R)-dihydrolipoyl]-L-lysyl-[protein] + 4 Fe(3+) + 2 hydrogen sulfide + 2 5'-deoxyadenosine + 2 L-methionine + 2 reduced [2Fe-2S]-[ferredoxin]. It participates in protein modification; protein lipoylation via endogenous pathway; protein N(6)-(lipoyl)lysine from octanoyl-[acyl-carrier-protein]: step 2/2. Catalyzes the radical-mediated insertion of two sulfur atoms into the C-6 and C-8 positions of the octanoyl moiety bound to the lipoyl domains of lipoate-dependent enzymes, thereby converting the octanoylated domains into lipoylated derivatives. The chain is Lipoyl synthase, mitochondrial from Aspergillus niger (strain ATCC MYA-4892 / CBS 513.88 / FGSC A1513).